Reading from the N-terminus, the 196-residue chain is Phosphoheptose isomerase (196 aa).

Residues 34 to 193 (LIETFKIGNK…EQGLFGIFAG (160 aa)) enclose the SIS domain. 49-51 (NGG) lines the substrate pocket. Zn(2+) is bound by residues histidine 58 and glutamate 62. Substrate contacts are provided by residues glutamate 62, 91–92 (ND), 117–119 (STS), serine 122, and glutamine 169. 2 residues coordinate Zn(2+): glutamine 169 and histidine 177.

Belongs to the SIS family. GmhA subfamily. Homotetramer. It depends on Zn(2+) as a cofactor.

The protein localises to the cytoplasm. The enzyme catalyses 2 D-sedoheptulose 7-phosphate = D-glycero-alpha-D-manno-heptose 7-phosphate + D-glycero-beta-D-manno-heptose 7-phosphate. It functions in the pathway carbohydrate biosynthesis; D-glycero-D-manno-heptose 7-phosphate biosynthesis; D-glycero-alpha-D-manno-heptose 7-phosphate and D-glycero-beta-D-manno-heptose 7-phosphate from sedoheptulose 7-phosphate: step 1/1. Catalyzes the isomerization of sedoheptulose 7-phosphate in D-glycero-D-manno-heptose 7-phosphate. This is Phosphoheptose isomerase from Trichlorobacter lovleyi (strain ATCC BAA-1151 / DSM 17278 / SZ) (Geobacter lovleyi).